Here is a 103-residue protein sequence, read N- to C-terminus: PTS system oligo-beta-mannoside-specific EIIB component (103 aa).

A PTS EIIB type-3 domain is found at 1–103 (MKKILLACSS…EQALSLMVNQ (103 aa)). C8 (phosphocysteine intermediate) is an active-site residue. A Phosphocysteine; by EIIA modification is found at C8.

Its subcellular location is the cytoplasm. It carries out the reaction D-cellobiose(out) + N(pros)-phospho-L-histidyl-[protein] = 6-phospho-beta-D-glucosyl-(1-&gt;4)-D-glucose(in) + L-histidyl-[protein]. Its function is as follows. The phosphoenolpyruvate-dependent sugar phosphotransferase system (sugar PTS), a major carbohydrate active transport system, catalyzes the phosphorylation of incoming sugar substrates concomitantly with their translocation across the cell membrane. The enzyme II GmuABC PTS system is involved in the transport of oligo-glucomannans such as cellobiose or mannobiose. This Bacillus subtilis (strain 168) protein is PTS system oligo-beta-mannoside-specific EIIB component.